Reading from the N-terminus, the 498-residue chain is Cytochrome P450 monooxygenase aflU (498 aa).

Residues Thr5 to Phe27 form a helical membrane-spanning segment. 2 N-linked (GlcNAc...) asparagine glycosylation sites follow: Asn259 and Asn354. Cys438 contributes to the heme binding site.

Belongs to the cytochrome P450 family. The cofactor is heme.

The protein localises to the membrane. Its pathway is mycotoxin biosynthesis; aflatoxin biosynthesis. Its function is as follows. Cytochrome P450 monooxygenase; part of the gene cluster that mediates the biosynthesis of aflatoxins, a group of polyketide-derived furanocoumarins, and part of the most toxic and carcinogenic compounds among the known mycotoxins. The four major aflatoxins produced by A.parasiticus are aflatoxin B1 (AFB1), aflatoxin B2 (AFB2), aflatoxin G1 (AFG1) and aflatoxin G2 (AFG2). Within the aflatoxin pathway, the cytochrome P450 monooxygenase aflU is involved in the last steps in which OMST is converted to aflatoxins B1 and G1, and DHOMST to aflatoxins B2 and G2. The biosynthesis of aflatoxins begins with the norsolorinic acid synthase aflC that combines a hexanoyl starter unit produced by the fatty acid synthase aflA/aflB and 7 malonyl-CoA extender units to synthesize the precursor NOR. The second step is the conversion of NOR to averantin and requires the norsolorinic acid ketoreductase aflD, which catalyzes the dehydration of norsolorinic acid to form (1'S)-averantin. The norsolorinic acid reductases aflE and aflF may also play a role in the conversion of NOR to AVN. The cytochrome P450 monooxygenase aflG then catalyzes the hydroxylation of AVN to 5'hydroxyaverantin (HAVN). The next step is performed by the 5'-hydroxyaverantin dehydrogenase aflH that transforms HAVN to 5'-oxoaverantin (OAVN) which is further converted to averufin (AVF) by aflK that plays a dual role in the pathway, as a 5'-oxoaverantin cyclase that mediates conversion of 5'-oxoaverantin, as well as a versicolorin B synthase in a later step in the pathway. The averufin oxidase aflI catalyzes the conversion of AVF to versiconal hemiacetal acetate (VHA). VHA is then the substrate for the versiconal hemiacetal acetate esterase aflJ to yield versiconal (VAL). Versicolorin B synthase aflK then converts VAL to versicolorin B (VERB) by closing the bisfuran ring of aflatoxin which is required for DNA-binding, thus giving to aflatoxin its activity as a mutagen. Then, the activity of the versicolorin B desaturase aflL leads to versicolorin A (VERA). A branch point starts from VERB since it can also be converted to dihydrodemethylsterigmatocystin (DMDHST), probably also by aflL, VERA being a precursor for aflatoxins B1 and G1, and DMDHST for aflatoxins B2 and G2. Next, the versicolorin reductase aflM and the cytochrome P450 monooxygenase aflN are involved in conversion of VERA to demethylsterigmatocystin (DMST). AflX and aflY seem also involved in this step, through probable aflX-mediated epoxide ring-opening step following versicolorin A oxidation and aflY-mediated Baeyer-Villiger oxidation required for the formation of the xanthone ring. The methyltransferase aflO then leads to the modification of DMST to sterigmatocystin (ST), and of DMDHST to dihydrosterigmatocystin (DHST). Both ST and DHST are then substrates of the O-methyltransferase aflP to yield O-methylsterigmatocystin (OMST) and dihydro-O-methylsterigmatocystin (DHOMST), respectively. Finally OMST is converted to aflatoxins B1 and G1, and DHOMST to aflatoxins B2 and G2, via the action of several enzymes including O-methylsterigmatocystin oxidoreductase aflQ, the cytochrome P450 monooxygenase aflU, but also the NADH-dependent flavin oxidoreductase nadA which is specifically required for the synthesis of AFG1. The protein is Cytochrome P450 monooxygenase aflU of Aspergillus parasiticus (strain ATCC 56775 / NRRL 5862 / SRRC 143 / SU-1).